A 368-amino-acid chain; its full sequence is tRNA-specific 2-thiouridylase MnmA (368 aa).

Residues 12-19 and Met-38 each bind ATP; that span reads GMSGGVDS. The interaction with target base in tRNA stretch occupies residues 98–100; that stretch reads NPD. Cys-103 (nucleophile) is an active-site residue. A disulfide bridge connects residues Cys-103 and Cys-200. Gly-128 contacts ATP. The tract at residues 150–152 is interaction with tRNA; the sequence is KDQ. Cys-200 (cysteine persulfide intermediate) is an active-site residue. The segment at 311-312 is interaction with tRNA; that stretch reads RY.

Belongs to the MnmA/TRMU family.

The protein localises to the cytoplasm. It carries out the reaction S-sulfanyl-L-cysteinyl-[protein] + uridine(34) in tRNA + AH2 + ATP = 2-thiouridine(34) in tRNA + L-cysteinyl-[protein] + A + AMP + diphosphate + H(+). In terms of biological role, catalyzes the 2-thiolation of uridine at the wobble position (U34) of tRNA, leading to the formation of s(2)U34. The protein is tRNA-specific 2-thiouridylase MnmA of Aeromonas salmonicida (strain A449).